Reading from the N-terminus, the 300-residue chain is NAD kinase (300 aa).

The Proton acceptor role is filled by Asp-75. NAD(+) is bound by residues 75 to 76 (DG), 149 to 150 (ND), Arg-177, Asp-179, 190 to 195 (TAYALS), Ala-214, and Gln-248.

It belongs to the NAD kinase family. It depends on a divalent metal cation as a cofactor.

It localises to the cytoplasm. The enzyme catalyses NAD(+) + ATP = ADP + NADP(+) + H(+). Functionally, involved in the regulation of the intracellular balance of NAD and NADP, and is a key enzyme in the biosynthesis of NADP. Catalyzes specifically the phosphorylation on 2'-hydroxyl of the adenosine moiety of NAD to yield NADP. The polypeptide is NAD kinase (Burkholderia ambifaria (strain MC40-6)).